An 837-amino-acid polypeptide reads, in one-letter code: Striatin-interacting protein 1 (837 aa).

Position 1 is an N-acetylmethionine (methionine 1). The tract at residues 1–67 (MEPAAGTPGP…DSEGYSESPD (67 aa)) is disordered. The segment covering 18–35 (PQPPPPPPPATAQPPPGA) has biased composition (pro residues). The segment covering 47–60 (KAREFNRNQRKDSE) has biased composition (basic and acidic residues). Phosphoserine occurs at positions 59, 335, and 339. The tract at residues 336 to 423 (PPASASDLIE…DRLTCPKGLP (88 aa)) is disordered. Over residues 356-377 (KALIKQDNLDAFNERDPYKADD) the composition is skewed to basic and acidic residues. Over residues 378–391 (SREEEEENDDDNSL) the composition is skewed to acidic residues. Serine 788 bears the Phosphoserine mark. Residues 796-837 (DNCLQSVLGQRVDLPEDFQMNYDLWLEREVFSKPISWEELLQ) are required for STRIPAK core complex formation.

Belongs to the STRIP family. As to quaternary structure, part of the core of STRIPAK complexes composed of PP2A catalytic and scaffolding subunits, the striatins (PP2A regulatory subunits), the striatin-associated proteins MOB4, STRIP1 and STRIP2, PDCD10 and members of the STE20 kinases, such as STK24 and STK26. The STRIPAK complex can be extended by adapter proteins such as SLMAP:SIKE1, CTTNBP2 or CTTNBP2NL. Interacts with CDC42BPB. Interacts with CTTNBP2NL.

Its subcellular location is the cytoplasm. Plays a role in the regulation of cell morphology and cytoskeletal organization. Required in the cortical actin filament dynamics and cell shape. Part of the striatin-interacting phosphatase and kinase (STRIPAK) complexes. STRIPAK complexes have critical roles in protein (de)phosphorylation and are regulators of multiple signaling pathways including Hippo, MAPK, nuclear receptor and cytoskeleton remodeling. Different types of STRIPAK complexes are involved in a variety of biological processes such as cell growth, differentiation, apoptosis, metabolism and immune regulation. The polypeptide is Striatin-interacting protein 1 (STRIP1) (Bos taurus (Bovine)).